A 96-amino-acid chain; its full sequence is Acetolactate synthase isozyme 1 small subunit (96 aa).

Residues 10-83 form the ACT domain; that stretch reads ILELTVRNHP…DVVKVQRNQS (74 aa).

It belongs to the acetolactate synthase small subunit family. As to quaternary structure, dimer of large and small chains.

It catalyses the reaction 2 pyruvate + H(+) = (2S)-2-acetolactate + CO2. It functions in the pathway amino-acid biosynthesis; L-isoleucine biosynthesis; L-isoleucine from 2-oxobutanoate: step 1/4. Its pathway is amino-acid biosynthesis; L-valine biosynthesis; L-valine from pyruvate: step 1/4. This Escherichia coli O157:H7 protein is Acetolactate synthase isozyme 1 small subunit (ilvN).